The following is a 282-amino-acid chain: Bis(5'-nucleosyl)-tetraphosphatase, symmetrical (282 aa).

This sequence belongs to the Ap4A hydrolase family.

The catalysed reaction is P(1),P(4)-bis(5'-adenosyl) tetraphosphate + H2O = 2 ADP + 2 H(+). Functionally, hydrolyzes diadenosine 5',5'''-P1,P4-tetraphosphate to yield ADP. In Escherichia coli O127:H6 (strain E2348/69 / EPEC), this protein is Bis(5'-nucleosyl)-tetraphosphatase, symmetrical.